The primary structure comprises 298 residues: 4-hydroxy-tetrahydrodipicolinate synthase (298 aa).

Residue T51 coordinates pyruvate. The active-site Proton donor/acceptor is the Y139. K167 serves as the catalytic Schiff-base intermediate with substrate. I209 contributes to the pyruvate binding site.

Belongs to the DapA family. In terms of assembly, homotetramer; dimer of dimers.

The protein localises to the cytoplasm. The catalysed reaction is L-aspartate 4-semialdehyde + pyruvate = (2S,4S)-4-hydroxy-2,3,4,5-tetrahydrodipicolinate + H2O + H(+). It functions in the pathway amino-acid biosynthesis; L-lysine biosynthesis via DAP pathway; (S)-tetrahydrodipicolinate from L-aspartate: step 3/4. Functionally, catalyzes the condensation of (S)-aspartate-beta-semialdehyde [(S)-ASA] and pyruvate to 4-hydroxy-tetrahydrodipicolinate (HTPA). This Haemophilus influenzae (strain PittEE) protein is 4-hydroxy-tetrahydrodipicolinate synthase.